Reading from the N-terminus, the 193-residue chain is Xanthine phosphoribosyltransferase (193 aa).

Xanthine is bound by residues L20 and N27. A 5-phospho-alpha-D-ribose 1-diphosphate-binding site is contributed by 128-132 (ANGEA). Xanthine is bound at residue K156.

Belongs to the purine/pyrimidine phosphoribosyltransferase family. Xpt subfamily. Homodimer.

Its subcellular location is the cytoplasm. The catalysed reaction is XMP + diphosphate = xanthine + 5-phospho-alpha-D-ribose 1-diphosphate. Its pathway is purine metabolism; XMP biosynthesis via salvage pathway; XMP from xanthine: step 1/1. Its function is as follows. Converts the preformed base xanthine, a product of nucleic acid breakdown, to xanthosine 5'-monophosphate (XMP), so it can be reused for RNA or DNA synthesis. This chain is Xanthine phosphoribosyltransferase, found in Exiguobacterium sp. (strain ATCC BAA-1283 / AT1b).